The primary structure comprises 81 residues: ATP synthase subunit c, chloroplastic (81 aa).

2 consecutive transmembrane segments (helical) span residues 3 to 23 (PLIS…ASIG) and 57 to 77 (LAFM…LLFA).

This sequence belongs to the ATPase C chain family. F-type ATPases have 2 components, F(1) - the catalytic core - and F(0) - the membrane proton channel. F(1) has five subunits: alpha(3), beta(3), gamma(1), delta(1), epsilon(1). F(0) has four main subunits: a(1), b(1), b'(1) and c(10-14). The alpha and beta chains form an alternating ring which encloses part of the gamma chain. F(1) is attached to F(0) by a central stalk formed by the gamma and epsilon chains, while a peripheral stalk is formed by the delta, b and b' chains.

Its subcellular location is the plastid. It is found in the chloroplast thylakoid membrane. Its function is as follows. F(1)F(0) ATP synthase produces ATP from ADP in the presence of a proton or sodium gradient. F-type ATPases consist of two structural domains, F(1) containing the extramembraneous catalytic core and F(0) containing the membrane proton channel, linked together by a central stalk and a peripheral stalk. During catalysis, ATP synthesis in the catalytic domain of F(1) is coupled via a rotary mechanism of the central stalk subunits to proton translocation. In terms of biological role, key component of the F(0) channel; it plays a direct role in translocation across the membrane. A homomeric c-ring of between 10-14 subunits forms the central stalk rotor element with the F(1) delta and epsilon subunits. The sequence is that of ATP synthase subunit c, chloroplastic from Ceratophyllum demersum (Rigid hornwort).